The sequence spans 233 residues: Chaperone protein MrkB (233 aa).

The N-terminal stretch at 1–18 (MKRIALFFCFIFSFAAHA) is a signal peptide.

It belongs to the periplasmic pilus chaperone family.

Its subcellular location is the periplasm. Functionally, mediates assembly of pili by forming soluble multimeric complexes with pili subunits as an intermediate step in the assembly process. This protein is involved in type 3 pili assembly. The chain is Chaperone protein MrkB (mrkB) from Klebsiella pneumoniae.